We begin with the raw amino-acid sequence, 534 residues long: Blue-light-activated protein (534 aa).

One can recognise a PAS domain in the interval 20-93; sequence GKDIFFAAVE…QSIRDAIDQR (74 aa). S-4a-FMN cysteine is present on cysteine 70. The PAC domain maps to 94–148; the sequence is VDISTEILNYRKDGSSFWNALFISPVYNDAGELIYFFASQLDISRRRDAEEALRQ. One can recognise a Histidine kinase domain in the interval 161–390; the sequence is GIAHDFNNLL…TLRLYFPVDE (230 aa). Histidine 164 carries the phosphohistidine; by autocatalysis modification. A Response regulatory domain is found at 411–527; sequence RILIVEDRPD…DLARKVRQVL (117 aa). Residue aspartate 461 is modified to 4-aspartylphosphate.

FMN binds covalently to cysteine after exposure to blue light and this bond is spontaneously broken in the dark.

The enzyme catalyses ATP + protein L-histidine = ADP + protein N-phospho-L-histidine.. Its function is as follows. Photosensitive kinase and response regulator that is involved in increased bacterial virulence upon exposure to light. The polypeptide is Blue-light-activated protein (Pseudomonas syringae pv. syringae (strain B728a)).